The sequence spans 92 residues: Small ribosomal subunit protein bS20 (92 aa).

Residues 1-22 (MANSPQSKKRARQAEARAAVNK) are disordered.

It belongs to the bacterial ribosomal protein bS20 family.

Its function is as follows. Binds directly to 16S ribosomal RNA. This Cereibacter sphaeroides (strain ATCC 17029 / ATH 2.4.9) (Rhodobacter sphaeroides) protein is Small ribosomal subunit protein bS20.